The sequence spans 188 residues: Sulfopyruvate decarboxylase subunit beta (188 aa).

This sequence belongs to the TPP enzyme family. In terms of assembly, heterododecamer composed of 6 subunits alpha and 6 subunits beta. Thiamine diphosphate is required as a cofactor.

The enzyme catalyses 3-sulfopyruvate + H(+) = sulfoacetaldehyde + CO2. Its pathway is cofactor biosynthesis; coenzyme M biosynthesis; sulfoacetaldehyde from phosphoenolpyruvate and sulfite: step 4/4. Its activity is regulated as follows. Inhibited by oxygen when heated in air at 80 degrees Celsius. The enzyme is reactivated by addition of dithionite. In terms of biological role, involved in the biosynthesis of the coenzyme M (2-mercaptoethanesulfonic acid). Catalyzes the decarboxylation of sulfopyruvate to sulfoacetaldehyde. The polypeptide is Sulfopyruvate decarboxylase subunit beta (Methanocaldococcus jannaschii (strain ATCC 43067 / DSM 2661 / JAL-1 / JCM 10045 / NBRC 100440) (Methanococcus jannaschii)).